The sequence spans 122 residues: Cofilin-5 (122 aa).

Residues 3–122 form the ADF-H domain; that stretch reads SRIIEIDPNC…VKDLIQLSNL (120 aa).

Belongs to the actin-binding proteins ADF family.

The protein localises to the cytoplasm. It localises to the cytoskeleton. Controls actin polymerization and depolymerization. This Dictyostelium discoideum (Social amoeba) protein is Cofilin-5 (cofF).